The following is an 86-amino-acid chain: ATP synthase epsilon chain (86 aa).

This sequence belongs to the ATPase epsilon chain family. In terms of assembly, F-type ATPases have 2 components, CF(1) - the catalytic core - and CF(0) - the membrane proton channel. CF(1) has five subunits: alpha(3), beta(3), gamma(1), delta(1), epsilon(1). CF(0) has three main subunits: a, b and c.

The protein localises to the cell inner membrane. In terms of biological role, produces ATP from ADP in the presence of a proton gradient across the membrane. This chain is ATP synthase epsilon chain (atpC), found in Caulobacter vibrioides (strain ATCC 19089 / CIP 103742 / CB 15) (Caulobacter crescentus).